Consider the following 836-residue polypeptide: Protein translocase subunit SecA (836 aa).

Residues Q85, 103–107, and D492 each bind ATP; that span reads GEGKT. The Zn(2+) site is built by C820, C822, C831, and C832.

This sequence belongs to the SecA family. As to quaternary structure, monomer and homodimer. Part of the essential Sec protein translocation apparatus which comprises SecA, SecYEG and auxiliary proteins SecDF. Other proteins may also be involved. Zn(2+) serves as cofactor.

It is found in the cell membrane. The protein localises to the cytoplasm. It carries out the reaction ATP + H2O + cellular proteinSide 1 = ADP + phosphate + cellular proteinSide 2.. Part of the Sec protein translocase complex. Interacts with the SecYEG preprotein conducting channel. Has a central role in coupling the hydrolysis of ATP to the transfer of proteins into and across the cell membrane, serving as an ATP-driven molecular motor driving the stepwise translocation of polypeptide chains across the membrane. The protein is Protein translocase subunit SecA of Clostridium botulinum (strain Alaska E43 / Type E3).